The primary structure comprises 185 residues: Threonylcarbamoyl-AMP synthase (185 aa).

The region spanning S4 to G185 is the YrdC-like domain.

Belongs to the SUA5 family. TsaC subfamily.

It localises to the cytoplasm. The enzyme catalyses L-threonine + hydrogencarbonate + ATP = L-threonylcarbamoyladenylate + diphosphate + H2O. Required for the formation of a threonylcarbamoyl group on adenosine at position 37 (t(6)A37) in tRNAs that read codons beginning with adenine. Catalyzes the conversion of L-threonine, HCO(3)(-)/CO(2) and ATP to give threonylcarbamoyl-AMP (TC-AMP) as the acyladenylate intermediate, with the release of diphosphate. This chain is Threonylcarbamoyl-AMP synthase, found in Pseudomonas putida (strain GB-1).